Reading from the N-terminus, the 574-residue chain is Amino-acid acetyltransferase, mitochondrial (574 aa).

Residues 1–13 (MWRRIFAHGLKYD) constitute a mitochondrion transit peptide. An N-acetyltransferase domain is found at 392-560 (KGAKPSNNSP…KRLREFMRSV (169 aa)).

Belongs to the acetyltransferase family. In terms of assembly, interacts with the acetylglutamate kinase chain of AGR5,6.

It is found in the mitochondrion. The catalysed reaction is L-glutamate + acetyl-CoA = N-acetyl-L-glutamate + CoA + H(+). It functions in the pathway amino-acid biosynthesis; L-arginine biosynthesis; N(2)-acetyl-L-ornithine from L-glutamate: step 1/4. Its activity is regulated as follows. Feedback inhibition by L-arginine. N-acetylglutamate synthase involved in arginine biosynthesis. The protein is Amino-acid acetyltransferase, mitochondrial (ARG2) of Saccharomyces cerevisiae (strain YJM789) (Baker's yeast).